The sequence spans 450 residues: Signal recognition particle 54 kDa protein (450 aa).

GTP-binding positions include 107–114, 188–192, and 247–250; these read GIQGSGKT, DTAGR, and TKLD.

Belongs to the GTP-binding SRP family. SRP54 subfamily. Part of the signal recognition particle protein translocation system, which is composed of SRP and FtsY. Archaeal SRP consists of a 7S RNA molecule of 300 nucleotides and two protein subunits: SRP54 and SRP19.

Its subcellular location is the cytoplasm. It catalyses the reaction GTP + H2O = GDP + phosphate + H(+). Involved in targeting and insertion of nascent membrane proteins into the cytoplasmic membrane. Binds to the hydrophobic signal sequence of the ribosome-nascent chain (RNC) as it emerges from the ribosomes. The SRP-RNC complex is then targeted to the cytoplasmic membrane where it interacts with the SRP receptor FtsY. This chain is Signal recognition particle 54 kDa protein, found in Methanococcus vannielii (strain ATCC 35089 / DSM 1224 / JCM 13029 / OCM 148 / SB).